The primary structure comprises 228 residues: UPF0758 protein CLB_3028 (228 aa).

The 123-residue stretch at 106-228 (KISTPLDVSN…YVSMKEKGTI (123 aa)) folds into the MPN domain. Zn(2+)-binding residues include H177, H179, and D190. A JAMM motif motif is present at residues 177 to 190 (HNHPSGDPTPSKED).

Belongs to the UPF0758 family.

The chain is UPF0758 protein CLB_3028 from Clostridium botulinum (strain ATCC 19397 / Type A).